The primary structure comprises 265 residues: MLPYPQIDPVAIALGPLKVHWYGLMYLIGIGGAWWLAARRLAGFAPEWSREKLSDLVFWVALGVIAGGRLGYVLFYDLPAYLHDPSLILQVWRGGMSFHGGLLGVLLCSWIFARRNGKGFFELMDFIAPLVPIGLGAGRIGNFINAELWGKATDLPWAMIFPSDPQQLPRHPSQLYQFALEGVALFAILWFYSRRPRPTMAVSGLFALCYGIFRFIVEFVRVPDAQLGYLAFGWLTMGQLLCLPMILGGAGMMAWAYRREARLAH.

4 helical membrane-spanning segments follow: residues 10–30 (VAIA…LIGI), 56–76 (LVFW…VLFY), 87–107 (LILQ…GVLL), and 117–137 (GKGF…GLGA). Arg139 contributes to the a 1,2-diacyl-sn-glycero-3-phospho-(1'-sn-glycerol) binding site. Helical transmembrane passes span 172-192 (PSQL…LWFY), 200-220 (MAVS…VEFV), and 227-247 (LGYL…PMIL).

Belongs to the Lgt family.

Its subcellular location is the cell inner membrane. The enzyme catalyses L-cysteinyl-[prolipoprotein] + a 1,2-diacyl-sn-glycero-3-phospho-(1'-sn-glycerol) = an S-1,2-diacyl-sn-glyceryl-L-cysteinyl-[prolipoprotein] + sn-glycerol 1-phosphate + H(+). The protein operates within protein modification; lipoprotein biosynthesis (diacylglyceryl transfer). Its function is as follows. Catalyzes the transfer of the diacylglyceryl group from phosphatidylglycerol to the sulfhydryl group of the N-terminal cysteine of a prolipoprotein, the first step in the formation of mature lipoproteins. In Azotobacter vinelandii (strain DJ / ATCC BAA-1303), this protein is Phosphatidylglycerol--prolipoprotein diacylglyceryl transferase.